The following is a 456-amino-acid chain: UPF0496 protein 4 (456 aa).

Residues 205 to 221 traverse the membrane as a helical segment; it reads SVTVFVCSIFVAVLSGS.

It belongs to the ROH1 family.

Its subcellular location is the membrane. This is UPF0496 protein 4 from Oryza sativa subsp. indica (Rice).